A 246-amino-acid polypeptide reads, in one-letter code: UDP-N-acetyl-D-mannosaminuronic acid transferase (246 aa).

This sequence belongs to the glycosyltransferase 26 family.

The catalysed reaction is UDP-N-acetyl-alpha-D-mannosaminouronate + N-acetyl-alpha-D-glucosaminyl-di-trans,octa-cis-undecaprenyl diphosphate = beta-D-ManNAcA-(1-&gt;4)-alpha-D-GlcNAc-di-trans,octa-cis-undecaprenyl diphosphate + UDP + H(+). It participates in bacterial outer membrane biogenesis; enterobacterial common antigen biosynthesis. Catalyzes the synthesis of Und-PP-GlcNAc-ManNAcA (Lipid II), the second lipid-linked intermediate involved in enterobacterial common antigen (ECA) synthesis. In Escherichia coli O7:K1 (strain IAI39 / ExPEC), this protein is UDP-N-acetyl-D-mannosaminuronic acid transferase.